Consider the following 272-residue polypeptide: Putative phosphoenolpyruvate synthase regulatory protein (272 aa).

Residue G152–T159 coordinates ADP.

It belongs to the pyruvate, phosphate/water dikinase regulatory protein family. PSRP subfamily.

It catalyses the reaction [pyruvate, water dikinase] + ADP = [pyruvate, water dikinase]-phosphate + AMP + H(+). It carries out the reaction [pyruvate, water dikinase]-phosphate + phosphate + H(+) = [pyruvate, water dikinase] + diphosphate. Bifunctional serine/threonine kinase and phosphorylase involved in the regulation of the phosphoenolpyruvate synthase (PEPS) by catalyzing its phosphorylation/dephosphorylation. The polypeptide is Putative phosphoenolpyruvate synthase regulatory protein (Pseudomonas savastanoi pv. phaseolicola (strain 1448A / Race 6) (Pseudomonas syringae pv. phaseolicola (strain 1448A / Race 6))).